The chain runs to 306 residues: Palmitoyl-protein thioesterase ABHD10, mitochondrial (306 aa).

The transit peptide at 1-52 directs the protein to the mitochondrion; sequence MAVARLAAVAAWVPCRSWGCAAVPFGPHRGLSALLARIPQRAPRWLPACRQK. Residues 78–177 form the AB hydrolase-1 domain; it reads IIFIPGYLSY…KVVALLGVAT (100 aa). Residues Ser152, Asp249, and His279 each act as charge relay system in the active site.

The protein belongs to the AB hydrolase superfamily.

The protein resides in the mitochondrion. It catalyses the reaction S-hexadecanoyl-L-cysteinyl-[protein] + H2O = L-cysteinyl-[protein] + hexadecanoate + H(+). It carries out the reaction mycophenolic acid O-acyl-beta-D-glucuronide + H2O = mycophenolate + D-glucuronate + H(+). Its activity is regulated as follows. Inhibited by palmostatin-B. Its function is as follows. Acts as an acyl-protein thioesterase that hydrolyzes fatty acids from acylated residues in proteins. Regulates the mitochondrial S-depalmitoylation of the nucleophilic active site residue of peroxiredoxin-5/PRDX5, a key antioxidant protein, therefore modulating mitochondrial antioxidant ability. Also catalyzes the deglucuronidation of mycophenolic acid acyl-glucuronide, an active metabolite of the immunosuppressant drug mycophenolate. This chain is Palmitoyl-protein thioesterase ABHD10, mitochondrial (ABHD10), found in Pongo abelii (Sumatran orangutan).